We begin with the raw amino-acid sequence, 1191 residues long: Solute carrier family 12 member 2 (1191 aa).

Residues 1 to 166 (MEPAFPASSA…MSEGSLHSSG (166 aa)) form a disordered region. Over 1 to 258 (MEPAFPASSA…ADNKGVVKFG (258 aa)) the chain is Cytoplasmic. Composition is skewed to low complexity over residues 13 to 25 (QSQSGPEPGAGQQ), 59 to 69 (KGQTAAQPAAA), 80 to 99 (AAAPSPASPAAAAEPPAAAA), and 131 to 141 (SASSAHGGHQP). Residues 142–155 (PSESMNGYPQNGDT) are compositionally biased toward polar residues. A phosphothreonine; by OXSR1 and STK39 mark is found at Thr-175, Thr-179, and Thr-184. A phosphothreonine mark is found at Thr-189 and Thr-202. A discontinuously helical transmembrane segment spans residues 259 to 288 (WIKGVLVRCMLNIWGVMLFIRLSWIVGHAG). Leu-269 is a Na(+) binding site. K(+)-binding residues include Asn-270 and Ile-271. Trp-272 is a binding site for Na(+). Residues Gly-273, Val-274, and Met-275 each coordinate chloride. Residues 289–308 (IGLALLVIGTATVVTTITGL) form a helical membrane-spanning segment. Topologically, residues 309 to 339 (STSAITTNGFVRGGGAYYLISRSLGPEFGGA) are cytoplasmic. A helical membrane pass occupies residues 340-367 (IGLIFAFANAVAVAMYVVGFAETVRDLL). Phe-344 is a binding site for chloride. K(+) is bound at residue Tyr-355. The Extracellular segment spans residues 368–377 (VEHNALMIDE). Residues 378–401 (MSDIRIIGSVTIVVLFGISVAGME) traverse the membrane as a helical segment. At 402 to 404 (WEA) the chain is on the cytoplasmic side. Residues 405–426 (KAQIVLLGILLLAIVNFTVGTF) traverse the membrane as a helical segment. The Extracellular segment spans residues 427–458 (IPANDKRAKGFFNYRGEIFSENFVPDFRDGED). The chain crosses the membrane as a discontinuously helical span at residues 459 to 476 (FFSVFAIFFPAATGILAG). Positions 468, 469, and 471 each coordinate K(+). 2 residues coordinate chloride: Pro-468 and Ala-469. Residues Gly-472 and Ile-473 each contribute to the chloride site. The Cytoplasmic segment spans residues 477–491 (ANISGDLADPQLAIP). A helical membrane pass occupies residues 492 to 513 (KGTLLAILITTIVYAGAAVSVG). Residues 514-571 (SCIVREATGNLTDAIIPGTVTNCTNVACKLGFNFSSCATNKCSYGLMNDFQVMSLVSG) are Extracellular-facing. N-linked (GlcNAc...) asparagine glycans are attached at residues Asn-523 and Asn-535. Cys-536 and Cys-541 are disulfide-bonded. Asn-546 is a glycosylation site (N-linked (GlcNAc...) asparagine). A disulfide bridge connects residues Cys-550 and Cys-555. The helical transmembrane segment at 572–596 (FGPLITAGIFSATLSSALASLVSAP) threads the bilayer. 3 residues coordinate Na(+): Ala-583, Ser-586, and Ser-587. Topologically, residues 597–624 (KIFQALCKDNIYPGLHVFSVGYGKNNEP) are cytoplasmic. Helical transmembrane passes span 625 to 645 (LRGYVLTFFIGLGFILIAELN) and 646 to 664 (VIAPIISNFFLASYALINF). Phe-655 and Tyr-659 together coordinate chloride. Residues 665–687 (SVFHASLAKSPGWRPAFRFYNMW) lie on the Cytoplasmic side of the membrane. The next 2 membrane-spanning stretches (helical) occupy residues 688–705 (ISLIGAILCCGVMFVINW) and 706–718 (WAALLTNVIVLAL). Over 719 to 1191 (YIYVTYKKPD…NHQSVLTFYS (473 aa)) the chain is Cytoplasmic. The interval 734–751 (STQALTYLNALQHAIRLT) is scissor helix. A disordered region spans residues 929–972 (HSDADSSKPSSKSVSETNSPAVCQDQKDEEDDGKASTQPLLKKE). Low complexity predominate over residues 935–948 (SKPSSKSVSETNSP). Thr-1114 is modified (phosphothreonine).

Belongs to the SLC12A transporter family. Homodimer. In terms of processing, phosphorylated at Thr-175, Thr-179 and Thr-184 by OXSR1/OSR1 and STK39/SPAK downstream of WNK kinases (WNK1, WNK2, WNK3 or WNK4), promoting its activity. In terms of tissue distribution, strongly expressed in rectal gland, brain, gill and intestine. Also detected at lower levels in heart, kidney, and testis.

The protein localises to the basolateral cell membrane. It catalyses the reaction K(+)(out) + 2 chloride(out) + Na(+)(out) = K(+)(in) + 2 chloride(in) + Na(+)(in). Its activity is regulated as follows. Activated following phosphorylation by OXSR1/OSR1 and STK39/SPAK. Inhibited by bumetanide. Functionally, cation-chloride cotransporter which mediates the electroneutral transport of chloride, potassium and/or sodium ions across the membrane. Plays a vital role in the regulation of ionic balance and cell volume. The polypeptide is Solute carrier family 12 member 2 (SLC12A2) (Squalus acanthias (Spiny dogfish)).